The primary structure comprises 465 residues: GTPase Der (465 aa).

2 consecutive EngA-type G domains span residues 3–166 and 184–358; these read FLVA…LNEY and IHFS…ACAN. GTP-binding positions include 9–16, 56–60, 118–121, 190–197, 237–241, and 302–305; these read GRANVGKS, DTGGI, NKVD, GRPNVGKS, DTAGV, and NKWD. The region spanning 359–443 is the KH-like domain; sequence KKITTADATR…PIVFEFKQSE (85 aa). Positions 446 to 465 are disordered; sequence FADRKNKRSKDEGSKSKKVK.

The protein belongs to the TRAFAC class TrmE-Era-EngA-EngB-Septin-like GTPase superfamily. EngA (Der) GTPase family. In terms of assembly, associates with the 50S ribosomal subunit.

Its function is as follows. GTPase that plays an essential role in the late steps of ribosome biogenesis. This Francisella tularensis subsp. tularensis (strain WY96-3418) protein is GTPase Der.